Here is a 143-residue protein sequence, read N- to C-terminus: uncharacterized protein (143 aa).

The N-terminal stretch at 1–16 (MSRNRLFLVAGSLAVA) is a signal peptide. A helical membrane pass occupies residues 114-134 (GAYVFLGPGFTPGSPSGGSGG).

The protein resides in the membrane. This is an uncharacterized protein from Mycobacterium tuberculosis (strain CDC 1551 / Oshkosh).